A 403-amino-acid polypeptide reads, in one-letter code: Phosphoglycerate kinase (403 aa).

Substrate contacts are provided by residues 24–26 (DLN), arginine 39, 62–65 (HLGR), arginine 121, and arginine 161. Residues lysine 211, glycine 299, glutamate 330, and 359–362 (GGDS) contribute to the ATP site.

This sequence belongs to the phosphoglycerate kinase family. In terms of assembly, monomer.

It localises to the cytoplasm. The catalysed reaction is (2R)-3-phosphoglycerate + ATP = (2R)-3-phospho-glyceroyl phosphate + ADP. It participates in carbohydrate degradation; glycolysis; pyruvate from D-glyceraldehyde 3-phosphate: step 2/5. The sequence is that of Phosphoglycerate kinase from Rhodococcus jostii (strain RHA1).